We begin with the raw amino-acid sequence, 762 residues long: Palmitoyltransferase ZDHHC8 (762 aa).

At 1 to 13 the chain is on the cytoplasmic side; sequence MPRSPGTRLKPAK. A helical transmembrane segment spans residues 14–34; that stretch reads YIPVATAAALLVGSSTLFFVF. At 35–52 the chain is on the lumenal side; that stretch reads TCPWLTRAVSPAIPVYNG. The helical transmembrane segment at 53–73 threads the bilayer; that stretch reads ILFLFVLANFSMATFMDPGVF. Residues 74 to 148 are Cytoplasmic-facing; sequence PRADEDEDKE…NCIGRRNYRY (75 aa). The DHHC domain maps to 104–154; it reads KWCATCHFYRPPRCSHCSVCDNCVEDFDHHCPWVNNCIGRRNYRYFFLFLL. C134 functions as the S-palmitoyl cysteine intermediate in the catalytic mechanism. Residues 149-169 traverse the membrane as a helical segment; the sequence is FFLFLLSLSAHMVGVVAFGLL. Residues 170–190 are Lumenal-facing; it reads YVLNHSEGLGAAHTTITMAVM. Residues 191–211 form a helical membrane-spanning segment; that stretch reads CVAGLFFIPVIGLTGFHVVLV. At 212–762 the chain is on the cytoplasmic side; that stretch reads TRGRTTNEQV…VGGTTYEISV (551 aa). Disordered regions lie at residues 289 to 350, 362 to 423, 436 to 537, and 551 to 574; these read GLKA…PPTP, GPKT…TTDA, ASRR…SPVR, and ERKD…GDSG. The residue at position 335 (S335) is a Phosphoserine. Residues 408–417 show a composition bias toward pro residues; the sequence is LRPPYPPSPP. R439 carries the post-translational modification Omega-N-methylarginine. The segment covering 471–485 has biased composition (polar residues); that stretch reads RNGSLSYDSLLNPGS. Residues 511–521 show a composition bias toward pro residues; that stretch reads PSDPPRPPPRS. The segment covering 551–562 has biased composition (basic and acidic residues); sequence ERKDREERERLL. A phosphoserine mark is found at S603 and S624. Residues 626 to 644 are compositionally biased toward low complexity; sequence SSLSSSMSRAPRTSSSSLQ. 2 disordered regions span residues 626 to 684 and 707 to 744; these read SSLS…SYTG and DHPQ…PARH. S672, S679, S722, and S740 each carry phosphoserine.

It belongs to the DHHC palmitoyltransferase family. ERF2/ZDHHC9 subfamily. In terms of tissue distribution, expressed in brain cortex and hippocampus.

The protein localises to the golgi apparatus membrane. It localises to the mitochondrion membrane. The enzyme catalyses L-cysteinyl-[protein] + hexadecanoyl-CoA = S-hexadecanoyl-L-cysteinyl-[protein] + CoA. In terms of biological role, palmitoyltransferase that catalyzes the addition of palmitate onto various protein substrates and therefore functions in several unrelated biological processes. Through the palmitoylation of ABCA1 regulates the localization of the transporter to the plasma membrane and thereby regulates its function in cholesterol and phospholipid efflux. Could also pamitoylate the D(2) dopamine receptor DRD2 and regulate its stability and localization to the plasma membrane. Could also play a role in glutamatergic transmission. This chain is Palmitoyltransferase ZDHHC8, found in Mus musculus (Mouse).